The sequence spans 24 residues: Major pollen allergen Ole e 4 (24 aa).

Belongs to the glycosyl hydrolase 17 family. In terms of processing, the N-terminus is blocked.

The polypeptide is Major pollen allergen Ole e 4 (Olea europaea (Common olive)).